The primary structure comprises 173 residues: Crossover junction endodeoxyribonuclease RuvC (173 aa).

Catalysis depends on residues D8, E67, and D139. Mg(2+)-binding residues include D8, E67, and D139.

The protein belongs to the RuvC family. In terms of assembly, homodimer which binds Holliday junction (HJ) DNA. The HJ becomes 2-fold symmetrical on binding to RuvC with unstacked arms; it has a different conformation from HJ DNA in complex with RuvA. In the full resolvosome a probable DNA-RuvA(4)-RuvB(12)-RuvC(2) complex forms which resolves the HJ. Mg(2+) is required as a cofactor.

It is found in the cytoplasm. It carries out the reaction Endonucleolytic cleavage at a junction such as a reciprocal single-stranded crossover between two homologous DNA duplexes (Holliday junction).. In terms of biological role, the RuvA-RuvB-RuvC complex processes Holliday junction (HJ) DNA during genetic recombination and DNA repair. Endonuclease that resolves HJ intermediates. Cleaves cruciform DNA by making single-stranded nicks across the HJ at symmetrical positions within the homologous arms, yielding a 5'-phosphate and a 3'-hydroxyl group; requires a central core of homology in the junction. The consensus cleavage sequence is 5'-(A/T)TT(C/G)-3'. Cleavage occurs on the 3'-side of the TT dinucleotide at the point of strand exchange. HJ branch migration catalyzed by RuvA-RuvB allows RuvC to scan DNA until it finds its consensus sequence, where it cleaves and resolves the cruciform DNA. The polypeptide is Crossover junction endodeoxyribonuclease RuvC (Pectobacterium carotovorum subsp. carotovorum (strain PC1)).